Reading from the N-terminus, the 87-residue chain is Phosphocarrier protein HPr (87 aa).

The 86-residue stretch at 2–87 (ASKDFHIVAE…NETMTKEGLA (86 aa)) folds into the HPr domain. The active-site Pros-phosphohistidine intermediate is the His-15. Ser-46 bears the Phosphoserine; by HPrK/P mark.

Belongs to the HPr family.

The protein resides in the cytoplasm. Its activity is regulated as follows. Phosphorylation on Ser-46 inhibits the phosphoryl transfer from enzyme I to HPr. Its function is as follows. General (non sugar-specific) component of the phosphoenolpyruvate-dependent sugar phosphotransferase system (sugar PTS). This major carbohydrate active-transport system catalyzes the phosphorylation of incoming sugar substrates concomitantly with their translocation across the cell membrane. The phosphoryl group from phosphoenolpyruvate (PEP) is transferred to the phosphoryl carrier protein HPr by enzyme I. Phospho-HPr then transfers it to the PTS EIIA domain. P-Ser-HPr interacts with the catabolite control protein A (CcpA), forming a complex that binds to DNA at the catabolite response elements cre, operator sites preceding a large number of catabolite-regulated genes. Thus, P-Ser-HPr is a corepressor in carbon catabolite repression (CCR), a mechanism that allows bacteria to coordinate and optimize the utilization of available carbon sources. P-Ser-HPr also plays a role in inducer exclusion, in which it probably interacts with several non-PTS permeases and inhibits their transport activity. The chain is Phosphocarrier protein HPr (ptsH) from Streptococcus mutans serotype c (strain ATCC 700610 / UA159).